Here is a 109-residue protein sequence, read N- to C-terminus: Large ribosomal subunit protein uL22 (109 aa).

Belongs to the universal ribosomal protein uL22 family. As to quaternary structure, part of the 50S ribosomal subunit.

In terms of biological role, this protein binds specifically to 23S rRNA; its binding is stimulated by other ribosomal proteins, e.g. L4, L17, and L20. It is important during the early stages of 50S assembly. It makes multiple contacts with different domains of the 23S rRNA in the assembled 50S subunit and ribosome. The globular domain of the protein is located near the polypeptide exit tunnel on the outside of the subunit, while an extended beta-hairpin is found that lines the wall of the exit tunnel in the center of the 70S ribosome. This chain is Large ribosomal subunit protein uL22, found in Methylobacillus flagellatus (strain ATCC 51484 / DSM 6875 / VKM B-1610 / KT).